A 477-amino-acid chain; its full sequence is Mitochondrial adenyl nucleotide antiporter SLC25A24 (477 aa).

Residues 1 to 173 (MLRWLRGFVL…RFWKHSTGID (173 aa)) form a regulatory N-terminal domain region. Topologically, residues 1–197 (MLRWLRGFVL…EKKSGQWWRQ (197 aa)) are mitochondrial intermembrane. 4 consecutive EF-hand domains span residues 19 to 54 (EPPTRYETLFQKLDRNGDGVVDISELQEGLKSLGIP), 61 to 85 (EKIFTTGDVNKDGKLDFEEFMKYLK), 86 to 121 (DHEKKMKLAFKSLDKNNDGKIEASEIVQSLQILGLT), and 122 to 157 (ISEQQAELILQSIDADGTMTVDWNEWRDYFLFNPVT). Ca(2+) contacts are provided by Asp32, Asn34, Asp36, Val38, Glu43, Asp68, Asn70, Asp72, Lys74, Glu79, Asp99, Asn101, Asp103, Lys105, Glu110, Asp135, Asp137, Thr139, Thr141, and Glu146. The interval 159–168 (IEEIIRFWKH) is linker region. A C-terminal transmembrane transporter domain region spans residues 174-477 (IGDSLTIPDE…MKQTLGVTQK (304 aa)). 3 Solcar repeats span residues 192–278 (GQWW…YKKL), 286–371 (IGTF…LKSH), and 383–471 (PGVM…MKQT). A helical membrane pass occupies residues 198-215 (LLAGGVAGAVSRTSTAPL). Topologically, residues 216–252 (DRLKVMMQVHGSKSAKMNIYGGFQQMVKEGGIRSLWR) are mitochondrial matrix. The chain crosses the membrane as a helical span at residues 253–272 (GNGTNVIKIAPETAVKFWAY). At 273–295 (EQYKKLLTEEGQKIGTFERFVSG) the chain is on the mitochondrial intermembrane side. Residues 296–309 (SMAGATAQTFIYPM) traverse the membrane as a helical segment. The Mitochondrial matrix portion of the chain corresponds to 310–345 (EVLKTRLAVGKTGQYSGMFDCAKKILKYEGMGAFYK). Lys320 is subject to N6-acetyllysine; alternate. Residue Lys320 is modified to N6-succinyllysine; alternate. N6-acetyllysine is present on Lys336. Residues 346-365 (GYVPNLLGIIPYAGIDLAVY) form a helical membrane-spanning segment. Topologically, residues 366 to 388 (ELLKSHWLDNFAKDSVNPGVMVL) are mitochondrial intermembrane. The helical transmembrane segment at 389–406 (LGCGALSSTCGQLASYPL) threads the bilayer. Topologically, residues 407 to 445 (ALVRTRMQAQAMIEKSPQLNMVGLFRRILSKEGLPGLYR) are mitochondrial matrix. An N6-acetyllysine; alternate modification is found at Lys437. Lys437 bears the N6-succinyllysine; alternate mark. The chain crosses the membrane as a helical span at residues 446–465 (GITPNFMKVLPAVGISYVVY). At 466 to 477 (ENMKQTLGVTQK) the chain is on the mitochondrial intermembrane side.

This sequence belongs to the mitochondrial carrier (TC 2.A.29) family. In terms of assembly, monomer.

It localises to the mitochondrion inner membrane. The enzyme catalyses Mg(2+)(out) + phosphate(in) + ATP(out) = Mg(2+)(in) + phosphate(out) + ATP(in). It carries out the reaction ADP(out) + phosphate(in) + H(+)(out) = ADP(in) + phosphate(out) + H(+)(in). It catalyses the reaction AMP(out) + phosphate(in) = AMP(in) + phosphate(out). The catalysed reaction is phosphate(in) + ATP(out) + 2 H(+)(out) = phosphate(out) + ATP(in) + 2 H(+)(in). The enzyme catalyses dADP(in) + ADP(out) = dADP(out) + ADP(in). It carries out the reaction Mg(2+)(in) + ADP(out) + ATP(in) + H(+)(out) = Mg(2+)(out) + ADP(in) + ATP(out) + H(+)(in). It catalyses the reaction ADP(out) + diphosphate(in) = ADP(in) + diphosphate(out). The catalysed reaction is dAMP(in) + ADP(out) + H(+)(out) = dAMP(out) + ADP(in) + H(+)(in). The enzyme catalyses 3'-AMP(in) + ADP(out) + H(+)(out) = 3'-AMP(out) + ADP(in) + H(+)(in). It carries out the reaction dAMP(out) + phosphate(in) = dAMP(in) + phosphate(out). It catalyses the reaction 3'-AMP(out) + phosphate(in) = 3'-AMP(in) + phosphate(out). The catalysed reaction is dADP(out) + phosphate(in) + H(+)(out) = dADP(in) + phosphate(out) + H(+)(in). With respect to regulation, activated by an increase in cytosolic calcium levels that induce a conformational change of the N-terminal regulatory domain, uncapping the channel and allowing transport. Inhibited by bathophenanthroline, mersalyl, p-hydroxymercuribenzoate, bromcresol purple and tannic acid. Its function is as follows. Electroneutral antiporter that mediates the transport of adenyl nucleotides through the inner mitochondrial membrane. Originally identified as an ATP-magnesium/inorganic phosphate antiporter, it also acts as a broad specificity adenyl nucleotide antiporter. By regulating the mitochondrial matrix adenyl nucleotide pool could adapt to changing cellular energetic demands and indirectly regulate adenyl nucleotide-dependent metabolic pathways. In vitro, a low activity is also observed with guanyl and pyrimidine nucleotides. May play a role in protecting cells against oxidative stress-induced cell death, by buffering calcium levels in the mitochondrial matrix through the formation of calcium-phosphate precipitates. This Bos taurus (Bovine) protein is Mitochondrial adenyl nucleotide antiporter SLC25A24 (SLC25A24).